A 585-amino-acid polypeptide reads, in one-letter code: Epithelial sodium channel subunit gamma (585 aa).

Residues 1–55 (MAPGEKIKAKIKKNLPVTGPQAPTIKELMRWYCLNTNTHGCRRIVVSRGRLRRLL) are Cytoplasmic-facing. A helical transmembrane segment spans residues 56 to 76 (WIGFTLTAVALILWQCALLVF). Topologically, residues 77 to 477 (SFYTVSVSIK…GGQLGLWMSC (401 aa)) are extracellular. 6 disulfides stabilise this stretch: C100/C219, C308/C393, C330/C389, C334/C385, C343/C370, and C345/C359. N-linked (GlcNAc...) asparagine glycosylation is present at N207. A glycan (N-linked (GlcNAc...) asparagine) is linked at N433. Residues 478–498 (SVVCVIEIIEVFFIDFFSIIA) traverse the membrane as a helical segment. The Cytoplasmic segment spans residues 499–585 (RRQWQKAKEW…LTDTQMLDEL (87 aa)). The tract at residues 513–534 (QAPPCPEAPRSPQGQDNPALDI) is disordered. Positions 559–563 (PPPKY) match the PY motif; recruits WW domain-containing proteins and is thereby required for ubiquitination and inhibition of the channel by NEDD4 and NEDD4L motif.

It belongs to the amiloride-sensitive sodium channel (TC 1.A.6) family. SCNN1G subfamily. Component of the heterotrimeric epithelial sodium channel (ENaC) composed of an alpha/SCNN1A, a beta/SCNN1B and a gamma/SCNN1G subunit. An additional delta/SCNN1D subunit can replace the alpha/SCNN1A subunit to form an alternative channel with specific properties. Interacts with WWP1 (via WW domains). Interacts with WWP2 (via WW domains); inhibits the channel. Interacts with the full-length immature form of PCSK9 (pro-PCSK9); inhibits ENaC by promoting its proteasomal degradation. Interacts with BPIFA1; the interaction is indirect via SCNN1B and inhibits the proteolytic maturation of SCNN1A and SCNN1G and the activation of ENaC. Phosphorylated on serine and threonine residues. Aldosterone and insulin increase the basal level of phosphorylation. In terms of processing, ubiquitinated. Can be ubiquitinated at multiple sites and undergo monoubiquitination and polyubiquitination. Ubiquitination by NEDD4 or NEDD4L inhibits the ENaC channel through endocytosis, intracellular retention and degradation of its individual subunits. Post-translationally, ENaC is activated through the proteolytic maturation of its subunits. Furin cleaves the SCNN1G subunit first, followed by cleavage by prostasin (PRSS8), which results in a stepwise increase in the open probability of the channel due to the release of an inhibitory tract. BPIFA1, which is recruited by the SCNN1B subunit, prevents the proteolytic activation of ENaC. N-glycosylated. N-linked glycans are processed to complex type during ENaC complex assembly and transport to the plasma membrane.

The protein resides in the apical cell membrane. It carries out the reaction Na(+)(in) = Na(+)(out). Its activity is regulated as follows. Originally identified and characterized by its inhibition by the diuretic drug amiloride. In terms of biological role, this is one of the three pore-forming subunits of the heterotrimeric epithelial sodium channel (ENaC), a critical regulator of sodium balance and fluid homeostasis. ENaC operates in epithelial tissues, where it mediates the electrodiffusion of sodium ions from extracellular fluid through the apical membrane of cells, with water following osmotically. It plays a key role in maintaining sodium homeostasis through electrogenic sodium reabsorption in the kidneys. Additionally, ENaC is essential for airway surface liquid homeostasis, which is crucial for proper mucus clearance. The polypeptide is Epithelial sodium channel subunit gamma (Pan troglodytes (Chimpanzee)).